The chain runs to 243 residues: Carboxy-S-adenosyl-L-methionine synthase (243 aa).

Residues Tyr-35, Gly-68–Ser-70, Asp-92–Asn-93, and Arg-199 contribute to the S-adenosyl-L-methionine site.

The protein belongs to the class I-like SAM-binding methyltransferase superfamily. Cx-SAM synthase family. As to quaternary structure, homodimer.

It catalyses the reaction prephenate + S-adenosyl-L-methionine = carboxy-S-adenosyl-L-methionine + 3-phenylpyruvate + H2O. Functionally, catalyzes the conversion of S-adenosyl-L-methionine (SAM) to carboxy-S-adenosyl-L-methionine (Cx-SAM). The sequence is that of Carboxy-S-adenosyl-L-methionine synthase from Helicobacter pylori (strain ATCC 700392 / 26695) (Campylobacter pylori).